Here is a 77-residue protein sequence, read N- to C-terminus: Cysteine-rich protein 1 (77 aa).

The region spanning 2–63 (PKCPKCNKEV…HPCYAAMFGP (62 aa)) is the LIM zinc-binding domain. Residues lysine 9 and lysine 22 each carry the N6-acetyllysine modification. Omega-N-methylarginine is present on arginine 68.

Its function is as follows. Seems to have a role in zinc absorption and may function as an intracellular zinc transport protein. The sequence is that of Cysteine-rich protein 1 (CRIP1) from Homo sapiens (Human).